A 257-amino-acid chain; its full sequence is MAKFNKDSVSGTLTVVVLLSLICSLIVASAAVLLKPTQDIQKQLDKQKNILQAAGLMHENTNVQETYAKFIEPKIVDLATGDYVEDVANFDAKAFAKDPATSVAIKPEDDKANIRMRAKYAEVYLVKDEMGQTTQVVLPMYGNGLWSMMYGFVAVQPDANTVNGITYYEQGETAGLGGEIANPNWQKSFVGKKLFNANNEVALTIGKGASADKEHGVDGLSGATLTSKGVDNSFKYWFGTNGFGPYLAKFKATAGAN.

The chain crosses the membrane as a helical span at residues 13-33; that stretch reads LTVVVLLSLICSLIVASAAVL. T224 carries the post-translational modification FMN phosphoryl threonine.

It belongs to the NqrC family. In terms of assembly, composed of six subunits; NqrA, NqrB, NqrC, NqrD, NqrE and NqrF. FMN serves as cofactor.

Its subcellular location is the cell inner membrane. The enzyme catalyses a ubiquinone + n Na(+)(in) + NADH + H(+) = a ubiquinol + n Na(+)(out) + NAD(+). In terms of biological role, NQR complex catalyzes the reduction of ubiquinone-1 to ubiquinol by two successive reactions, coupled with the transport of Na(+) ions from the cytoplasm to the periplasm. NqrA to NqrE are probably involved in the second step, the conversion of ubisemiquinone to ubiquinol. The sequence is that of Na(+)-translocating NADH-quinone reductase subunit C from Haemophilus ducreyi (strain 35000HP / ATCC 700724).